Consider the following 170-residue polypeptide: MDILLVDGYNMIGAWPQLKDLKANSFEEARDVLIQKMAEYQSYTGNRVIVVFDAHLVKGLEKKQTNHRVEVIFTKENETADERIEKLAQALNNIATQIHVATSDYTEQWAIFGQGALRKSARELLREVETIERRIERRVRKITSEKPAGKIALSEEVLKTFEKWRRGDLD.

This is an uncharacterized protein from Bacillus subtilis (strain 168).